A 369-amino-acid chain; its full sequence is Homoserine O-acetyltransferase (369 aa).

The AB hydrolase-1 domain maps to 44–350; it reads NAILVAHAWT…AYGHDAFLLE (307 aa). Residue serine 150 is the Nucleophile of the active site. Arginine 217 serves as a coordination point for substrate. Active-site residues include aspartate 311 and histidine 344. Aspartate 345 provides a ligand contact to substrate.

This sequence belongs to the AB hydrolase superfamily. MetX family. As to quaternary structure, homodimer.

It localises to the cytoplasm. The catalysed reaction is L-homoserine + acetyl-CoA = O-acetyl-L-homoserine + CoA. The protein operates within amino-acid biosynthesis; L-methionine biosynthesis via de novo pathway; O-acetyl-L-homoserine from L-homoserine: step 1/1. Its function is as follows. Transfers an acetyl group from acetyl-CoA to L-homoserine, forming acetyl-L-homoserine. The protein is Homoserine O-acetyltransferase of Geobacter metallireducens (strain ATCC 53774 / DSM 7210 / GS-15).